A 255-amino-acid polypeptide reads, in one-letter code: 3-deoxy-manno-octulosonate cytidylyltransferase (255 aa).

This sequence belongs to the KdsB family.

The protein resides in the cytoplasm. The catalysed reaction is 3-deoxy-alpha-D-manno-oct-2-ulosonate + CTP = CMP-3-deoxy-beta-D-manno-octulosonate + diphosphate. The protein operates within nucleotide-sugar biosynthesis; CMP-3-deoxy-D-manno-octulosonate biosynthesis; CMP-3-deoxy-D-manno-octulosonate from 3-deoxy-D-manno-octulosonate and CTP: step 1/1. It functions in the pathway bacterial outer membrane biogenesis; lipopolysaccharide biosynthesis. Its function is as follows. Activates KDO (a required 8-carbon sugar) for incorporation into bacterial lipopolysaccharide in Gram-negative bacteria. The chain is 3-deoxy-manno-octulosonate cytidylyltransferase from Saccharophagus degradans (strain 2-40 / ATCC 43961 / DSM 17024).